Reading from the N-terminus, the 381-residue chain is Curved DNA-binding protein (381 aa).

Ser8 is subject to Phosphoserine. Thr362 is subject to Phosphothreonine. Residues 368–375 carry the Nuclear localization signal motif; sequence KNKKKSKK.

It belongs to the peptidase M24 family.

The protein localises to the nucleus. A non-essential protein that preferentially binds curved DNA. Binds non-curved DNA with a much lower affinity. This Schizosaccharomyces pombe (strain 972 / ATCC 24843) (Fission yeast) protein is Curved DNA-binding protein (cdb4).